Consider the following 35-residue polypeptide: Natriuretic peptide TNPa (35 aa).

The cysteines at positions 9 and 25 are disulfide-linked.

In terms of tissue distribution, expressed by the venom gland.

The protein localises to the secreted. Its function is as follows. Snake venom natriuretic peptide that exhibits vasoactive and probable hypotensive activity. Is only weakly active on natriuretic peptide receptor-C (NPR3). Stimulates cGMP production through the natriuretic peptide receptor 1 (NPR1) with moderate potencies for the rat NPR1 (EC(50)=2020 nM), and very weak potencies over human NPR1 (15% activation at 10 uM). In vivo, does not impact systolic and diastolic blood pressure, as well as heart rate, when intravenously injected in conscious rabbits. Does not affect the bradycardia due to cardiac afferent stimulation (Bezold-Jarisch reflex). This chain is Natriuretic peptide TNPa, found in Oxyuranus microlepidotus (Inland taipan).